The chain runs to 290 residues: Nitrogenase iron protein 1 (290 aa).

Glycine 10–serine 17 provides a ligand contact to ATP. A [4Fe-4S] cluster-binding site is contributed by cysteine 98. ADP-ribosylarginine; by dinitrogenase reductase ADP-ribosyltransferase is present on arginine 101. A [4Fe-4S] cluster-binding site is contributed by cysteine 133.

Belongs to the NifH/BchL/ChlL family. As to quaternary structure, homodimer. It depends on [4Fe-4S] cluster as a cofactor. In terms of processing, the reversible ADP-ribosylation of Arg-101 inactivates the nitrogenase reductase and regulates nitrogenase activity.

It catalyses the reaction N2 + 8 reduced [2Fe-2S]-[ferredoxin] + 16 ATP + 16 H2O = H2 + 8 oxidized [2Fe-2S]-[ferredoxin] + 2 NH4(+) + 16 ADP + 16 phosphate + 6 H(+). Its activity is regulated as follows. Nitrogenase holoenzyme is subject to 'conformational protection' by FeSII; under oxidizing conditions FeSII binds to the holoenzyme and reversibly protects it from oxidation. In terms of biological role, the key enzymatic reactions in nitrogen fixation are catalyzed by the nitrogenase complex, which has 2 components: the iron protein (component 2) and a component 1 which is either a molybdenum-iron protein, a vanadium-iron, or an iron-iron protein. The protein is Nitrogenase iron protein 1 (nifH1) of Azotobacter vinelandii.